The sequence spans 80 residues: Protein Vpu (80 aa).

At 1–6 the chain is on the extracellular side; sequence MYILGL. Residues 7–27 traverse the membrane as a helical segment; sequence GIGALVVTFIIAVIVWTIVYI. The Cytoplasmic portion of the chain corresponds to 28 to 80; the sequence is EYKKLVRQKKIDRLIERIGERAEDSGNESDGDTEELSKLMEMGHLNLGYVADL. Residues Ser52 and Ser56 each carry the phosphoserine; by host CK2 modification.

Belongs to the HIV-1 VPU protein family. In terms of assembly, homopentamer. Interacts with host CD4 and BRTC; these interactions induce proteasomal degradation of CD4. Interacts with host BST2; this interaction leads to the degradation of host BST2. Interacts with host FBXW11. Interacts with host AP1M1; this interaction plays a role in the mistrafficking and subsequent degradation of host BST2. Interacts with host RANBP2; this interaction allows Vpu to down-regulate host BLM sumoylation. Post-translationally, phosphorylated by host CK2. This phosphorylation is necessary for interaction with human BTRC and degradation of CD4.

The protein resides in the host membrane. Ion channel activity is inhibited by hexamethylene amiloride in vitro. Enhances virion budding by targeting host CD4 and Tetherin/BST2 to proteasome degradation. Degradation of CD4 prevents any unwanted premature interactions between viral Env and its host receptor CD4 in the endoplasmic reticulum. Degradation of antiretroviral protein Tetherin/BST2 is important for virion budding, as BST2 tethers new viral particles to the host cell membrane. Mechanistically, Vpu bridges either CD4 or BST2 to BTRC, a substrate recognition subunit of the Skp1/Cullin/F-box protein E3 ubiquitin ligase, induces their ubiquitination and subsequent proteasomal degradation. The alteration of the E3 ligase specificity by Vpu seems to promote the degradation of host IKBKB, leading to NF-kappa-B down-regulation and subsequent apoptosis. Acts as a viroporin that forms an oligomeric ion channel in membranes. Modulates the host DNA repair mechanisms to promote degradation of nuclear viral cDNA in cells that are already productively infected in order to suppress immune sensing and proviral hyper-integration (superinfection). Manipulates PML-NBs and modulates SUMOylation of host BLM protein thereby enhancing its DNA-end processing activity toward viral unintegrated linear DNA. Also inhibits RAD52-mediated homologous repair of viral cDNA, preventing the generation of dead-end circular forms of single copies of the long terminal repeat and permitting sustained nucleolytic attack. This is Protein Vpu from Human immunodeficiency virus type 1 group M subtype H (isolate 90CF056) (HIV-1).